We begin with the raw amino-acid sequence, 325 residues long: ATP phosphoribosyltransferase (325 aa).

This sequence belongs to the ATP phosphoribosyltransferase family. Long subfamily. Mg(2+) serves as cofactor.

Its subcellular location is the cytoplasm. The enzyme catalyses 1-(5-phospho-beta-D-ribosyl)-ATP + diphosphate = 5-phospho-alpha-D-ribose 1-diphosphate + ATP. It functions in the pathway amino-acid biosynthesis; L-histidine biosynthesis; L-histidine from 5-phospho-alpha-D-ribose 1-diphosphate: step 1/9. Feedback inhibited by histidine. Functionally, catalyzes the condensation of ATP and 5-phosphoribose 1-diphosphate to form N'-(5'-phosphoribosyl)-ATP (PR-ATP). Has a crucial role in the pathway because the rate of histidine biosynthesis seems to be controlled primarily by regulation of HisG enzymatic activity. The chain is ATP phosphoribosyltransferase from Afipia carboxidovorans (strain ATCC 49405 / DSM 1227 / KCTC 32145 / OM5) (Oligotropha carboxidovorans).